The primary structure comprises 296 residues: Polyamine aminopropyltransferase (296 aa).

Residues His-16–Lys-251 enclose the PABS domain. Gln-46 provides a ligand contact to S-methyl-5'-thioadenosine. Positions 77 and 101 each coordinate spermidine. S-methyl-5'-thioadenosine is bound by residues Glu-121 and Asn-152–Gly-153. The active-site Proton acceptor is Asp-170. Asp-170–Asp-173 serves as a coordination point for spermidine.

It belongs to the spermidine/spermine synthase family. As to quaternary structure, homodimer or homotetramer.

The protein resides in the cytoplasm. It carries out the reaction S-adenosyl 3-(methylsulfanyl)propylamine + putrescine = S-methyl-5'-thioadenosine + spermidine + H(+). Its pathway is amine and polyamine biosynthesis; spermidine biosynthesis; spermidine from putrescine: step 1/1. Catalyzes the irreversible transfer of a propylamine group from the amino donor S-adenosylmethioninamine (decarboxy-AdoMet) to putrescine (1,4-diaminobutane) to yield spermidine. The chain is Polyamine aminopropyltransferase from Thermotoga neapolitana (strain ATCC 49049 / DSM 4359 / NBRC 107923 / NS-E).